Consider the following 1129-residue polypeptide: MACLTMANIEGSATATVHQNGDILGNTSAPKQTEPLLQVYLYYSPGKTGGDYLQFPAGEYVAEEICIVACKACGIMPVYHNMFALMSETERVWYPPNHIFHVDEATRLKLLYRIRFYFPHWYCNGTSRACRYGIIRGSESPVLDDLVMSYLFAQWRKDFLDGWIQMPVTHETQEECLGMAVLDMMRVAKEKDQTPLAVYNSVSYKMFLPKCVRAKIQEYHILTRKRIRYRFRKFIQQFGQCKATARNLKLKYLINLETLQSAFYSEVFEVKEPGGDPSGEESFATIVITGNGGIQCSRGKLKNCETLAEQDLQTYCDFPDIIDVSIKQASQEGSSERRIVTIHKQDSKNLEAEFQSLREALSFVSLIDGYYRLTADAHHYLCKEVAPPSVLENIQSNCHGPIFMDFAINKLKKAGNQTGFYVLRCSPKDFKKYFLTFAIERENATDYKHCLITKNENGEYNLSGTKRSFGNLKDLLTCYQTETVRSDSIIFQFIKCCPPKPKDKSNLLVFRSNSVSDVPSSPTLQRHNVSQMVFHKIRNEDLIFEESLGQGTFTKIFKGIRKEVGDYGQLHQTEVLLKVLDKVHRNYSESFFEAASMMSQLSYKHLVLNYGVCVCGEENILVQEYVKFGSLDTYLKKNKNVINILWKLEVAKQLALAMHFLEDKGLVHGNVCAKNILLIREEDRKSGNLPFIKLSDPGISITVLPRDILLERIPWVPPECIENPRQLSLATDKWSFGTTLWEICSGGDKPLSALDSSRKLQFYEDRHQLPAPNWTELANLINNCMDYEPDFRPSFRAIIRDLNSLFTPDYELLTENDMLPNIRTGALGFSGAFEDRDPTQFEERHLKFLQQLGKGNFGSVEMCRYDPLQDNTGEVVAVKKLQHSTEEHLRDFEREIEILKSLQHDNIVKYKGVCYSAGRRNLRLIMEYLPYGSLRDYLQKHKERLDHKKLLLYASQICKGMEYLGTKRYVHRDLATRNILVENENRVKIGDFGLTKVLPQDKEYYKVKEPGESPIFWYAPESLTESKFSVASDVWSFGVVLYELFTYIEKSKSPPAEFMRMIGNDKQGQMIVFHLIELLKNNGRLPRPDGCPDEIYAIMKECWNNNVAQRPTFRDLAQRVDQIRDNMGG.

The FERM domain occupies 35–378 (PLLQVYLYYS…GYYRLTADAH (344 aa)). Phosphotyrosine; by autocatalysis is present on tyrosine 117. One can recognise an SH2; atypical domain in the interval 399–480 (HGPIFMDFAI…NLKDLLTCYQ (82 aa)). Protein kinase domains follow at residues 542–806 (LIFE…NSLF) and 846–1118 (LKFL…DLAQ). 852–860 (LGKGNFGSV) serves as a coordination point for ATP. A Phosphotyrosine; by autocatalysis modification is found at tyrosine 865. ATP is bound at residue lysine 879. Phosphotyrosine; by autocatalysis occurs at positions 963 and 969. Aspartate 973 acts as the Proton acceptor in catalysis. Phosphotyrosine; by autocatalysis occurs at positions 1004 and 1005.

It belongs to the protein kinase superfamily. Tyr protein kinase family. JAK subfamily. Post-translationally, autophosphorylated, leading to regulate its activity.

The protein resides in the endomembrane system. The protein localises to the nucleus. The catalysed reaction is L-tyrosyl-[protein] + ATP = O-phospho-L-tyrosyl-[protein] + ADP + H(+). With respect to regulation, regulated by autophosphorylation, can both activate or decrease activity. Heme regulates its activity by enhancing the phosphorylation on Tyr-1004 and Tyr-1005. Non-receptor tyrosine kinase involved in various processes such as cell growth, development, differentiation or histone modifications. Mediates essential signaling events in both innate and adaptive immunity. In the cytoplasm, plays a pivotal role in signal transduction via its association with cytokine receptors. Following ligand-binding to cell surface receptors, phosphorylates specific tyrosine residues on the cytoplasmic tails of the receptor, creating docking sites for STATs proteins. Subsequently, phosphorylates the STATs proteins once they are recruited to the receptor. Phosphorylated STATs then form homodimer or heterodimers and translocate to the nucleus to activate gene transcription. For example, cell stimulation with erythropoietin (EPO) during erythropoiesis leads to JAK2 autophosphorylation, activation, and its association with erythropoietin receptor (EPOR) that becomes phosphorylated in its cytoplasmic domain. Then, STAT5 (STAT5A or STAT5B) is recruited, phosphorylated and activated by JAK2. Once activated, dimerized STAT5 translocates into the nucleus and promotes the transcription of several essential genes involved in the modulation of erythropoiesis. Part of a signaling cascade that is activated by increased cellular retinol and that leads to the activation of STAT5 (STAT5A or STAT5B). In the nucleus, plays a key role in chromatin by specifically mediating phosphorylation of 'Tyr-41' of histone H3 (H3Y41ph), a specific tag that promotes exclusion of CBX5 (HP1 alpha) from chromatin. Up-regulates the potassium voltage-gated channel activity of KCNA3. The polypeptide is Tyrosine-protein kinase JAK2 (Gallus gallus (Chicken)).